An 84-amino-acid chain; its full sequence is Fulditoxin (84 aa).

Positions 1 to 21 are cleaved as a signal peptide; sequence MKTLLLTLVVVTIVCLDLGNS. 4 disulfide bridges follow: Cys24-Cys41, Cys34-Cys59, Cys63-Cys71, and Cys72-Cys77. Residue His50 participates in Zn(2+) binding.

It belongs to the three-finger toxin family. Short-chain subfamily. As to quaternary structure, homodimer; non-covalently linked. Is able to form a tetramer of dimers in the presence of 2 zinc ions. Expressed by the venom gland.

The protein resides in the secreted. In terms of biological role, postsynaptic neurotoxin that produces potent, and completely reversible, postsynaptic neuromuscular blockade, as well as broad spectrum inhibition of human muscle and neuronal nicotinic acetylcholine receptors (nAChRs). Inhibition is potent or moderate, depending on the receptor (alpha-1-beta-1-delta-epsilon/CHRNA1-CHRNB1-CHRND-CHRNE (IC(50)=2.56 uM), alpha-4-beta-2/CHRNA4-CHRNB2 (IC(50)=1.8 uM), alpha-7/CHRNA7 (IC(50)=7 uM), and alpha-3-beta-2/CHRNA3-CHRNB2 (IC(50)=12.6 uM)). Acts as a competitive antagonist of ACh. Binds to chicken muscle-type nicotinic acetylcholine receptor (AChR) with high potency compared with the cloned human receptor. Unlike short-chain alpha-3FTxs that only bind to muscle nAChRs, this toxin utilizes dimerization to expand its pharmacological targets to block neuronal nAChRs. The polypeptide is Fulditoxin (Micrurus fulvius (Eastern coral snake)).